The chain runs to 231 residues: Demethylmenaquinone methyltransferase (231 aa).

Residues Thr-62, Asp-80, 102–103, and Ser-119 each bind S-adenosyl-L-methionine; that span reads DA.

It belongs to the class I-like SAM-binding methyltransferase superfamily. MenG/UbiE family.

The enzyme catalyses a 2-demethylmenaquinol + S-adenosyl-L-methionine = a menaquinol + S-adenosyl-L-homocysteine + H(+). Its pathway is quinol/quinone metabolism; menaquinone biosynthesis; menaquinol from 1,4-dihydroxy-2-naphthoate: step 2/2. Methyltransferase required for the conversion of demethylmenaquinol (DMKH2) to menaquinol (MKH2). The protein is Demethylmenaquinone methyltransferase of Streptomyces avermitilis (strain ATCC 31267 / DSM 46492 / JCM 5070 / NBRC 14893 / NCIMB 12804 / NRRL 8165 / MA-4680).